The sequence spans 362 residues: Aminomethyltransferase (362 aa).

This sequence belongs to the GcvT family. As to quaternary structure, the glycine cleavage system is composed of four proteins: P, T, L and H.

The enzyme catalyses N(6)-[(R)-S(8)-aminomethyldihydrolipoyl]-L-lysyl-[protein] + (6S)-5,6,7,8-tetrahydrofolate = N(6)-[(R)-dihydrolipoyl]-L-lysyl-[protein] + (6R)-5,10-methylene-5,6,7,8-tetrahydrofolate + NH4(+). Functionally, the glycine cleavage system catalyzes the degradation of glycine. This is Aminomethyltransferase from Chlorobium limicola (strain DSM 245 / NBRC 103803 / 6330).